Consider the following 217-residue polypeptide: GTP cyclohydrolase-2 (217 aa).

Residue 50 to 54 coordinates GTP; it reads RIHSE. Zn(2+) is bound by residues C55, C66, and C68. GTP is bound by residues Q71, 93-95, and T115; that span reads EGR. The active-site Proton acceptor is the D127. The active-site Nucleophile is the R129. T150 and K155 together coordinate GTP.

It belongs to the GTP cyclohydrolase II family. Zn(2+) serves as cofactor.

It carries out the reaction GTP + 4 H2O = 2,5-diamino-6-hydroxy-4-(5-phosphoribosylamino)-pyrimidine + formate + 2 phosphate + 3 H(+). Its pathway is cofactor biosynthesis; riboflavin biosynthesis; 5-amino-6-(D-ribitylamino)uracil from GTP: step 1/4. Functionally, catalyzes the conversion of GTP to 2,5-diamino-6-ribosylamino-4(3H)-pyrimidinone 5'-phosphate (DARP), formate and pyrophosphate. The polypeptide is GTP cyclohydrolase-2 (Actinobacillus succinogenes (strain ATCC 55618 / DSM 22257 / CCUG 43843 / 130Z)).